The sequence spans 222 residues: Large ribosomal subunit protein uL1 (222 aa).

It belongs to the universal ribosomal protein uL1 family. Part of the 50S ribosomal subunit.

Functionally, binds directly to 23S rRNA. Probably involved in E site tRNA release. Protein L1 is also a translational repressor protein, it controls the translation of its operon by binding to its mRNA. The protein is Large ribosomal subunit protein uL1 of Pyrobaculum aerophilum (strain ATCC 51768 / DSM 7523 / JCM 9630 / CIP 104966 / NBRC 100827 / IM2).